The primary structure comprises 545 residues: Probable intron-encoded endonuclease 4 (545 aa).

7 consecutive transmembrane segments (helical) span residues 1–21, 30–50, 81–101, 119–139, 140–160, 177–197, and 200–220; these read MYLS…FFGR, LITC…FFEV, LTVA…IYSI, LFTF…MFVG, WEGV…RIAA, FLTI…YATV, and LAPY…LIGA. Positions 1–239 are ndh-5 exons 1 and 2 encoded; that stretch reads MYLSIIILPL…HVWLPMAMEG (239 aa). Residues 240–545 are ndh-5 intron 2 encoded; that stretch reads FFSRAFLKLH…NNINKSDYNK (306 aa).

In the N-terminal section; belongs to the complex I subunit 5 family. This sequence in the C-terminal section; belongs to the LAGLIDADG endonuclease family.

The protein resides in the mitochondrion membrane. Functionally, mitochondrial DNA endonuclease involved in intron homing. This is Probable intron-encoded endonuclease 4 from Neurospora crassa (strain ATCC 24698 / 74-OR23-1A / CBS 708.71 / DSM 1257 / FGSC 987).